Consider the following 99-residue polypeptide: Mitochondrial import receptor subunit TOM9-2 (99 aa).

Over 2-51 the chain is Cytoplasmic; the sequence is AAKRIGAGKSGGGDPNILARISNSEIVSQGRRAAGDAVEVSKKLLRSTGK. A helical transmembrane segment spans residues 52–69; the sequence is AAWIAGTTFLILVVPLII. Residues 70–99 are Mitochondrial intermembrane-facing; the sequence is EMDREAQINEIELQQASLLGAPPSPMQRGL.

Belongs to the Tom22 family. Forms part of the preprotein translocase complex of the outer mitochondrial membrane (TOM complex) which consists of at least 6 different proteins (TOM5, TOM6, TOM7, TOM20, TOM22/TOM9 and TOM40). As to expression, expressed in young cotyledons, roots, flowers and leaves.

It is found in the mitochondrion outer membrane. Central component of the receptor complex responsible for the recognition and translocation of cytosolically synthesized mitochondrial preproteins. Together with TOM20 functions as the transit peptide receptor at the surface of the mitochondrion outer membrane and facilitates the movement of preproteins into the translocation pore. This chain is Mitochondrial import receptor subunit TOM9-2 (TOM9-2), found in Arabidopsis thaliana (Mouse-ear cress).